A 552-amino-acid chain; its full sequence is Carboxypeptidase Y homolog A (552 aa).

Residues 1–17 (MRVLPATLLVGAATAAT) form the signal peptide. Residues 18–133 (PAQQVLGGLQ…KLEAYDLRIK (116 aa)) constitute a propeptide that is removed on maturation. Cystine bridges form between cysteine 188-cysteine 428, cysteine 322-cysteine 336, cysteine 346-cysteine 369, cysteine 353-cysteine 362, and cysteine 391-cysteine 398. N-linked (GlcNAc...) asparagine glycosylation is present at asparagine 219. Serine 275 is a catalytic residue. Aspartate 467 is an active-site residue. Asparagine 518 carries N-linked (GlcNAc...) asparagine glycosylation. Histidine 529 is a catalytic residue.

Belongs to the peptidase S10 family.

The protein localises to the vacuole. It carries out the reaction Release of a C-terminal amino acid with broad specificity.. Vacuolar carboxypeptidase involved in degradation of small peptides. Digests preferentially peptides containing an aliphatic or hydrophobic residue in P1' position, as well as methionine, leucine or phenylalanine in P1 position of ester substrate. In Emericella nidulans (strain FGSC A4 / ATCC 38163 / CBS 112.46 / NRRL 194 / M139) (Aspergillus nidulans), this protein is Carboxypeptidase Y homolog A (cpyA).